The sequence spans 865 residues: MIEGVTELATPNVPPAPPSPSAMRRALRRARDGVSLNLDEAVVLLHARGDDLADLCRSAARVRDAGLESAGRPGTITYSRNVFIPLTRLCRDRCHYCTFVTVPGKLRAEGKGMFLEPDEVLDIARRGAALGCKEALFTLGDRPEDRWPEAAQWLDERGYDSTLDYLRAVSILVLEETGLLPHLNPGVMSWAEIARLKPVAQSMGMMLETTATRLFTEKGQCHHGSPDKDPAVRLRAITDAGRLSVPYTTGILVGIGETLTERAESIMAIRKQHKAFGHIQEVIVQNFRAKDDTAMRDAPDAGFDEFRATIAVTRLLLGPDVPVQAPPNLVSQQECLALIEAGIDDWGGVSPVTPDHVNPERPWPNLDTLRELTEASGFTLVERTSAHPKYVRAGNPWIDPRIGAHVAALTDPVTGLAKADALPVGLPWQEPDESWESAGRTDLNIAIDTEGRNTEARSDAALGQDVVGAFGDWDTIREQVRDLAVNAPERLDSDVLAALRAAERDPAGLSDDQYLALATADGAELDAVAALADQLRRDTVGDDVTYVVNRNINFTNICYTGCRFCAFAQRKGDADAFTLSTEEVADRAWEAYVDGATEVCMQGGIDPDLPVTGYADLVRAVKRRVPSMHVHAFSPMEIVNGASRGGESIADWLTALKEAGLDTIPGTAAEILDDEVRWVLTKGKLPSSAWIEVITTAHRVGLRSSSTMMYGHVDNPSHWVGHLRVLRGIQDETGGFTEFVLLPFVHQSAPLYLAGAARPGPTIRDNRAAHALARIMLHGRIDNIQTSWVKLGIAGTRVMLQGGANDLGGTLMEETISRMAGSQHGSAKTVAELAEIAEGIGRPVRERTTVYGRVDRRPAPIVPVG.

A disordered region spans residues 1 to 21; the sequence is MIEGVTELATPNVPPAPPSPS. 2 Radical SAM core domains span residues 76–320 and 544–785; these read ITYS…LGPD and VTYV…DNIQ. Residues 77–409 form a cofG-like region; sequence TYSRNVFIPL…PRIGAHVAAL (333 aa). The [4Fe-4S] cluster site is built by Cys90, Cys94, Cys97, Cys558, Cys562, and Cys565. Positions 521 to 854 are cofH-like; the sequence is DGAELDAVAA…RERTTVYGRV (334 aa).

The protein in the N-terminal section; belongs to the radical SAM superfamily. CofG family. It in the C-terminal section; belongs to the radical SAM superfamily. CofH family. Requires [4Fe-4S] cluster as cofactor.

The enzyme catalyses 5-amino-6-(D-ribitylamino)uracil + L-tyrosine + S-adenosyl-L-methionine = 5-amino-5-(4-hydroxybenzyl)-6-(D-ribitylimino)-5,6-dihydrouracil + 2-iminoacetate + 5'-deoxyadenosine + L-methionine + H(+). The catalysed reaction is 5-amino-5-(4-hydroxybenzyl)-6-(D-ribitylimino)-5,6-dihydrouracil + S-adenosyl-L-methionine = 7,8-didemethyl-8-hydroxy-5-deazariboflavin + 5'-deoxyadenosine + L-methionine + NH4(+) + H(+). The protein operates within cofactor biosynthesis; coenzyme F0 biosynthesis. Functionally, catalyzes the radical-mediated synthesis of 7,8-didemethyl-8-hydroxy-5-deazariboflavin (FO) from 5-amino-6-(D-ribitylamino)uracil and L-tyrosine. The protein is FO synthase (fbiC) of Nocardia farcinica (strain IFM 10152).